The chain runs to 591 residues: Peroxisome assembly protein 2 (591 aa).

The disordered stretch occupies residues 1–78 (MSDSDPKPTA…TNIDTNNNTN (78 aa)). Over 1 to 148 (MSDSDPKPTA…TSREGTRPAF (148 aa)) the chain is Peroxisomal matrix. The segment covering 7–26 (KPTAAKGAAPTSIPNSTRNP) has biased composition (low complexity). The span at 27 to 54 (NPTPPNPNPNPNPISTPAPTPTATPSPP) shows a compositional bias: pro residues. Over residues 55–78 (IASSSNNGNNSTRSTNIDTNNNTN) the composition is skewed to low complexity. Residues 149 to 175 (RVGQVDAELLDEELVELLRGQVREALR) traverse the membrane as a helical segment. The Cytoplasmic segment spans residues 176–196 (YVGGGGGGGGGGGGGGVGSGV). The chain crosses the membrane as a helical span at residues 197–222 (AQDWEAEISLALRAVLFKLTVWDHDA). Residues 223–246 (TYGAALQNLKYTDARRDGPALAPP) are Peroxisomal matrix-facing. Residues 247-273 (SRWQKALYGLVTVGGRYLWAKWEDWLL) traverse the membrane as a helical segment. The Cytoplasmic segment spans residues 274-283 (EQDDGFEGPS). The helical transmembrane segment at 284-314 (PRVKRLARWTSALSTLHASAALVSFLVFLLH) threads the bilayer. Residues 315–341 (GRYRTLLDRLLRMRLAPPTSQVSREVS) are Peroxisomal matrix-facing. Residues 342 to 365 (FEYLNRQLVWHAFTEFLLFVLPLV) form a helical membrane-spanning segment. The Cytoplasmic portion of the chain corresponds to 366 to 591 (GINRWRRWLA…EDGLDEDPES (226 aa)). The Zn(2+) site is built by Cys408, Cys411, Cys449, Cys451, Cys454, Cys457, Cys472, and Cys475. The RING-type; atypical zinc finger occupies 408–475 (CAICYRDQNS…EGEGWPCLRC (68 aa)). A disordered region spans residues 512-591 (KAPSDHEEEE…EDGLDEDPES (80 aa)). 2 stretches are compositionally biased toward acidic residues: residues 517–537 (HEEE…ENEG) and 575–591 (SEDY…DPES).

Belongs to the pex2/pex10/pex12 family. Component of the PEX2-PEX10-PEX12 retrotranslocation channel, composed of PEX2, PEX10 and PEX12.

The protein resides in the peroxisome membrane. The catalysed reaction is [E2 ubiquitin-conjugating enzyme]-S-ubiquitinyl-L-cysteine + [acceptor protein]-L-cysteine = [E2 ubiquitin-conjugating enzyme]-L-cysteine + [acceptor protein]-S-ubiquitinyl-L-cysteine.. It participates in protein modification; protein ubiquitination. Functionally, E3 ubiquitin-protein ligase component of a retrotranslocation channel required for peroxisome organization by mediating export of the PEX5 receptor from peroxisomes to the cytosol, thereby promoting PEX5 recycling. The retrotranslocation channel is composed of PEX2, PEX10 and PEX12; each subunit contributing transmembrane segments that coassemble into an open channel that specifically allows the passage of PEX5 through the peroxisomal membrane. PEX2 also regulates peroxisome organization by acting as a E3 ubiquitin-protein ligase. PEX2 ubiquitinates PEX5 during its passage through the retrotranslocation channel: catalyzes monoubiquitination of PEX5 at 'Cys-6', a modification that acts as a signal for PEX5 extraction into the cytosol. The chain is Peroxisome assembly protein 2 from Thermothelomyces thermophilus (strain ATCC 42464 / BCRC 31852 / DSM 1799) (Sporotrichum thermophile).